Here is a 298-residue protein sequence, read N- to C-terminus: MTETTRKPEWLKVRLPHGEGYERVKAIVKRTKLATVCEEARCPNIAECWGGGTATVMLMGEVCTRACRFCHVKVGAPPPLDPMEPIHLAQAVKEMDLEYIVVTSVNRDDRPDGGASHFASAIRELRRESPRTIVEVLIPDFKGVEKDLTTVAEAKPHVVAHNVETVERLTPTVRDRRAKYHQSLRVLEYLKNRPEGLYTKTSVMVGLGETDAELEQTFKDLRDVGVDVLTLGQYLQPSQYHLRVERFVTPAQFEAYKTLAESYGFLYVASGPLVRSSYRAAEFFMKGLMERERLERLG.

Positions 37, 42, 48, 63, 67, 70, and 277 each coordinate [4Fe-4S] cluster. One can recognise a Radical SAM core domain in the interval 49-266 (WGGGTATVML…KTLAESYGFL (218 aa)).

It belongs to the radical SAM superfamily. Lipoyl synthase family. It depends on [4Fe-4S] cluster as a cofactor.

The protein localises to the cytoplasm. It catalyses the reaction [[Fe-S] cluster scaffold protein carrying a second [4Fe-4S](2+) cluster] + N(6)-octanoyl-L-lysyl-[protein] + 2 oxidized [2Fe-2S]-[ferredoxin] + 2 S-adenosyl-L-methionine + 4 H(+) = [[Fe-S] cluster scaffold protein] + N(6)-[(R)-dihydrolipoyl]-L-lysyl-[protein] + 4 Fe(3+) + 2 hydrogen sulfide + 2 5'-deoxyadenosine + 2 L-methionine + 2 reduced [2Fe-2S]-[ferredoxin]. Its pathway is protein modification; protein lipoylation via endogenous pathway; protein N(6)-(lipoyl)lysine from octanoyl-[acyl-carrier-protein]: step 2/2. Its function is as follows. Catalyzes the radical-mediated insertion of two sulfur atoms into the C-6 and C-8 positions of the octanoyl moiety bound to the lipoyl domains of lipoate-dependent enzymes, thereby converting the octanoylated domains into lipoylated derivatives. The chain is Lipoyl synthase from Myxococcus xanthus (strain DK1622).